Consider the following 158-residue polypeptide: NADH-quinone oxidoreductase subunit B (158 aa).

Positions 37, 38, 102, and 132 each coordinate [4Fe-4S] cluster.

It belongs to the complex I 20 kDa subunit family. NDH-1 is composed of 14 different subunits. Subunits NuoB, C, D, E, F, and G constitute the peripheral sector of the complex. It depends on [4Fe-4S] cluster as a cofactor.

It localises to the cell inner membrane. The enzyme catalyses a quinone + NADH + 5 H(+)(in) = a quinol + NAD(+) + 4 H(+)(out). Its function is as follows. NDH-1 shuttles electrons from NADH, via FMN and iron-sulfur (Fe-S) centers, to quinones in the respiratory chain. Couples the redox reaction to proton translocation (for every two electrons transferred, four hydrogen ions are translocated across the cytoplasmic membrane), and thus conserves the redox energy in a proton gradient. The sequence is that of NADH-quinone oxidoreductase subunit B from Legionella pneumophila (strain Paris).